Consider the following 199-residue polypeptide: Ribonuclease HII (199 aa).

The 199-residue stretch at 1–199 (MCVCGIDEAG…TYKNLVQGHI (199 aa)) folds into the RNase H type-2 domain. The a divalent metal cation site is built by Asp7, Glu8, and Asp97.

Belongs to the RNase HII family. Mn(2+) serves as cofactor. The cofactor is Mg(2+).

It is found in the cytoplasm. The enzyme catalyses Endonucleolytic cleavage to 5'-phosphomonoester.. Endonuclease that specifically degrades the RNA of RNA-DNA hybrids. In Picrophilus torridus (strain ATCC 700027 / DSM 9790 / JCM 10055 / NBRC 100828 / KAW 2/3), this protein is Ribonuclease HII.